Reading from the N-terminus, the 440-residue chain is Gap junction alpha-8 protein (440 aa).

Residues 2–12 lie within the membrane without spanning it; the sequence is GDWSFLGNILE. Residues 13–21 are Cytoplasmic-facing; it reads EVNEHSTVI. The helical transmembrane segment at 22 to 42 threads the bilayer; the sequence is GRVWLTVLFIFRILILGTAAE. Topologically, residues 43-71 are extracellular; that stretch reads FVWGDEQSDFVCNTQQPGCENVCYDEAFP. Intrachain disulfides connect Cys-54/Cys-201, Cys-61/Cys-195, and Cys-65/Cys-190. The chain crosses the membrane as a helical span at residues 72-92; that stretch reads ISHIRLWVLQIIFVSTPSLMY. The Cytoplasmic segment spans residues 93 to 161; it reads VGHAVHHVRM…GTLLRTYVCH (69 aa). The disordered stretch occupies residues 111 to 143; that stretch reads AEELCQQSRSNGGERVPIAPDQASIRKSSSSSK. The chain crosses the membrane as a helical span at residues 162–182; it reads IIFKTLFEVGFIVGHYFLYGF. The Extracellular segment spans residues 183–210; that stretch reads RILPLYRCSRWPCPNVVDCFVSRPTEKT. A helical transmembrane segment spans residues 211–231; sequence IFILFMLSVAFVSLFLNIMEM. The Cytoplasmic portion of the chain corresponds to 232–440; the sequence is SHLGMKGIRS…SRARSDDLTI (209 aa). The interval 338 to 440 is disordered; it reads VEREEPPIEE…SRARSDDLTI (103 aa). Basic and acidic residues-rich tracts occupy residues 353 to 364 and 374 to 399; these read VGEKKQEAEKVA and PDRERVETPGVGKEDEKEELQAEKVT. Residues 423–432 show a composition bias toward low complexity; the sequence is LSRLSKASSR.

This sequence belongs to the connexin family. Alpha-type (group II) subfamily. A hemichannel or connexon is composed of a hexamer of connexins. A functional gap junction is formed by the apposition of two hemichannels. Forms heteromeric channels with GJA3. As to expression, detected in eye lens (at protein level). Eye lens.

The protein resides in the cell membrane. It localises to the cell junction. The protein localises to the gap junction. Structural component of eye lens gap junctions. Gap junctions are dodecameric channels that connect the cytoplasm of adjoining cells. They are formed by the docking of two hexameric hemichannels, one from each cell membrane. Small molecules and ions diffuse from one cell to a neighboring cell via the central pore. This is Gap junction alpha-8 protein (Gja8) from Mus musculus (Mouse).